A 421-amino-acid chain; its full sequence is L-evernosamine nitrososynthase (421 aa).

Belongs to the acyl-CoA dehydrogenase family. Homotetramer. FAD is required as a cofactor.

The catalysed reaction is dTDP-beta-L-evernosamine + 2 NADPH + 2 O2 + H(+) = dTDP-2,3,6-trideoxy-3-C-methyl-4-O-methyl-3-nitroso-beta-L-arabino-hexopyranose + 2 NADP(+) + 3 H2O. It carries out the reaction dTDP-beta-L-evernosamine + NADPH + O2 = dTDP-N-hydroxy-beta-L-evernosamine + NADP(+) + H2O. It catalyses the reaction dTDP-N-hydroxy-beta-L-evernosamine + NADPH + O2 + H(+) = dTDP-2,3,6-trideoxy-3-C-methyl-4-O-methyl-3-nitroso-beta-L-arabino-hexopyranose + NADP(+) + 2 H2O. It participates in antibiotic biosynthesis. Its function is as follows. Nitrososynthase involved in the biosynthesis of everninomicin, a broad spectrum orthosomycin antibiotic. Catalyzes the double-oxidation of TDP-L-evernosamine to TDP-L-evernitrosose. The enzyme first oxidizes the substrate to a transient hydroxylamino intermediate, which is then further oxidized to nitroso sugar. The nitroso group is probably spontaneously oxidized giving TDP-L-evernitrose. In vitro, catalyzes the double-oxidation of TDP-L-epi-vancosamine to TDP-L-epi-vancosonitrose. Can also use biosynthetic progenitors of TDP-L-epi-vancosamine, but progenitors solely undergo single-oxidation reactions and terminate in the hydroxylamine oxidation state. In Micromonospora sp. (strain ATCC 39149 / NRRL 15099 / SCC 1413), this protein is L-evernosamine nitrososynthase.